A 90-amino-acid chain; its full sequence is Protein LIM1 (90 aa).

The signal sequence occupies residues 1–26 (MASMKSLATAILVVLLLAALSREGRS). 4 disulfides stabilise this stretch: Cys29–Cys66, Cys39–Cys55, Cys56–Cys81, and Cys68–Cys88.

This sequence belongs to the A9/FIL1 family.

The protein resides in the secreted. The sequence is that of Protein LIM1 (LIM1) from Lilium longiflorum (Trumpet lily).